A 68-amino-acid chain; its full sequence is Large ribosomal subunit protein uL29c (68 aa).

This sequence belongs to the universal ribosomal protein uL29 family.

Its subcellular location is the plastid. The protein localises to the chloroplast. The polypeptide is Large ribosomal subunit protein uL29c (Pyropia yezoensis (Susabi-nori)).